Here is a 395-residue protein sequence, read N- to C-terminus: MANDYLFTSESVSEGHPDKVADQISDAILDAILAQDKYSRVAAETLCNTGLVVLAGEITTTANIDYIQIARDTIKRIGYDNTDYGIDYRGCAVLVAYDKQSPDIAQGVDRAHDNNLDQGAGDQGLMFGYACDETPELMPLPIHLSHRLVERQANLRRDGRLPWLRPDAKSQVTVRYVDGKPHSIDTVVLSTQHAPDIDLPALREAVIEEIIKPTLPADLIKGDIKFLVNPTGRFVIGGPQGDCGLTGRKIIVDTYGGAAPHGGGAFSGKDPSKVDRSAAYAGRYVAKNIVAAGLASRALIQVSYAIGVAEPTSVMVNTFGTGRVSDETITKLVREHFDLRPKGIIQMLDLLRPIYEKTAAYGHFGREEPEFSWEAADKALALAEAAGVEPAVQVA.

Residue His-16 participates in ATP binding. Asp-18 is a binding site for Mg(2+). Glu-44 is a binding site for K(+). L-methionine-binding residues include Glu-57 and Gln-100. A flexible loop region spans residues 100 to 110 (QSPDIAQGVDR). ATP-binding positions include 167 to 169 (DAK), 233 to 234 (RF), Asp-242, 248 to 249 (RK), Ala-265, and Lys-269. Asp-242 is a binding site for L-methionine. L-methionine is bound at residue Lys-273.

It belongs to the AdoMet synthase family. Homotetramer; dimer of dimers. It depends on Mg(2+) as a cofactor. The cofactor is K(+).

It localises to the cytoplasm. It carries out the reaction L-methionine + ATP + H2O = S-adenosyl-L-methionine + phosphate + diphosphate. It functions in the pathway amino-acid biosynthesis; S-adenosyl-L-methionine biosynthesis; S-adenosyl-L-methionine from L-methionine: step 1/1. Its function is as follows. Catalyzes the formation of S-adenosylmethionine (AdoMet) from methionine and ATP. The overall synthetic reaction is composed of two sequential steps, AdoMet formation and the subsequent tripolyphosphate hydrolysis which occurs prior to release of AdoMet from the enzyme. This chain is S-adenosylmethionine synthase, found in Burkholderia thailandensis (strain ATCC 700388 / DSM 13276 / CCUG 48851 / CIP 106301 / E264).